The chain runs to 540 residues: Chaperonin GroEL (540 aa).

ATP is bound by residues 29–32 (TIGP), 86–90 (DGTTT), Gly-413, 476–478 (NAA), and Asp-492.

This sequence belongs to the chaperonin (HSP60) family. As to quaternary structure, forms a cylinder of 14 subunits composed of two heptameric rings stacked back-to-back. Interacts with the co-chaperonin GroES.

Its subcellular location is the cytoplasm. It carries out the reaction ATP + H2O + a folded polypeptide = ADP + phosphate + an unfolded polypeptide.. In terms of biological role, together with its co-chaperonin GroES, plays an essential role in assisting protein folding. The GroEL-GroES system forms a nano-cage that allows encapsulation of the non-native substrate proteins and provides a physical environment optimized to promote and accelerate protein folding. The chain is Chaperonin GroEL from Staphylococcus saprophyticus subsp. saprophyticus (strain ATCC 15305 / DSM 20229 / NCIMB 8711 / NCTC 7292 / S-41).